Consider the following 157-residue polypeptide: Ribosome maturation factor RimP (157 aa).

This sequence belongs to the RimP family.

Its subcellular location is the cytoplasm. In terms of biological role, required for maturation of 30S ribosomal subunits. The sequence is that of Ribosome maturation factor RimP from Geobacillus kaustophilus (strain HTA426).